Consider the following 76-residue polypeptide: U10-ctenitoxin-Pn1a (76 aa).

The signal sequence occupies residues 1–15 (SFVFYLFTLITVVRA). A propeptide spanning residues 16–36 (EEFILENEAEDIAPAVHGESG) is cleaved from the precursor. Intrachain disulfides connect Cys-39-Cys-54, Cys-46-Cys-59, Cys-53-Cys-73, and Cys-61-Cys-71.

This sequence belongs to the neurotoxin 02 (plectoxin) family. 09 subfamily. In terms of tissue distribution, expressed by the venom gland.

The protein resides in the secreted. The chain is U10-ctenitoxin-Pn1a from Phoneutria nigriventer (Brazilian armed spider).